The sequence spans 376 residues: Lipoyl synthase 1, chloroplastic (376 aa).

Residues 1–13 (MIEQSLSKPSFSL) are compositionally biased toward polar residues. 2 disordered regions span residues 1–25 (MIEQSLSKPSFSLSIPIPQPPKSKS) and 47–75 (IDAKHPQISSINSNGGGKMGSYTGRDPNV). A chloroplast-targeting transit peptide spans 1 to 35 (MIEQSLSKPSFSLSIPIPQPPKSKSSFLCSYSKIR). Residues Cys107, Cys112, Cys118, Cys138, Cys142, Cys145, and Ser353 each contribute to the [4Fe-4S] cluster site. The Radical SAM core domain maps to 121–342 (GGGDGIATAT…KEYGESIGFR (222 aa)).

Belongs to the radical SAM superfamily. Lipoyl synthase family. [4Fe-4S] cluster is required as a cofactor.

It is found in the plastid. Its subcellular location is the chloroplast. The enzyme catalyses [[Fe-S] cluster scaffold protein carrying a second [4Fe-4S](2+) cluster] + N(6)-octanoyl-L-lysyl-[protein] + 2 oxidized [2Fe-2S]-[ferredoxin] + 2 S-adenosyl-L-methionine + 4 H(+) = [[Fe-S] cluster scaffold protein] + N(6)-[(R)-dihydrolipoyl]-L-lysyl-[protein] + 4 Fe(3+) + 2 hydrogen sulfide + 2 5'-deoxyadenosine + 2 L-methionine + 2 reduced [2Fe-2S]-[ferredoxin]. It participates in protein modification; protein lipoylation via endogenous pathway; protein N(6)-(lipoyl)lysine from octanoyl-[acyl-carrier-protein]: step 2/2. Functionally, catalyzes the radical-mediated insertion of two sulfur atoms into the C-6 and C-8 positions of the octanoyl moiety bound to the lipoyl domains of lipoate-dependent enzymes, thereby converting the octanoylated domains into lipoylated derivatives. The protein is Lipoyl synthase 1, chloroplastic of Populus trichocarpa (Western balsam poplar).